The chain runs to 295 residues: G1/S-specific cyclin-D1 (295 aa).

Residues 28-152 (LRAMLKTEET…LLVNKLKWNL (125 aa)) enclose the Cyclin N-terminal domain. Residue lysine 269 forms a Glycyl lysine isopeptide (Lys-Gly) (interchain with G-Cter in ubiquitin) linkage. The segment at 269–295 (KATEEEGEVEEEAGLACTPTDVRDVDI) is disordered. Residue threonine 286 is modified to Phosphothreonine.

The protein belongs to the cyclin family. Cyclin D subfamily. As to quaternary structure, interacts with either CDK4 or CDK6 protein kinase to form a serine/threonine kinase holoenzyme complex. The cyclin subunit imparts substrate specificity to the complex. Component of the ternary complex CCND1/CDK4/CDKN1B required for nuclear translocation and modulation of CDK4-mediated kinase activity. Interacts directly with CDKN1B. Can form similar complexes with either CDKN1A or CDKN2A. Interacts with UHRF2; the interaction ubiquitinates CCND1 and appears to occur independently of phosphorylation. Interacts with USP2. Interacts (via cyclin N-terminal domain) with INSM1 (via N-terminal region); the interaction competes with the binding of CCND1 to CDK4 during cell cycle progression and inhibits CDK4 activity. Interacts with CDK4; the interaction is prevented with the binding of CCND1 to INSM1 during cell cycle progression. Post-translationally, phosphorylation at Thr-286 by MAP kinases is required for ubiquitination and degradation by the DCX(AMBRA1) complex. It also plays an essential role for recognition by the FBXO31 component of SCF (SKP1-cullin-F-box) protein ligase complex following DNA damage. In terms of processing, ubiquitinated at Lys-269 by the DCX(AMBRA1) complex during the transition from G1 to S cell phase, leading to its degradation: ubiquitination is dependent on Thr-286 phosphorylation. The DCX(AMBRA1) complex represents the major regulator of CCND1 stability during the G1/S transition. Also ubiquitinated by the SCF(FBXO4) and Cul7-RING(FBXW8) ubiquitin-protein ligase complexes. Following DNA damage it is ubiquitinated by the SCF(FBXO31) protein ligase complex. SCF(FBXO31) ubiquitination is dependent on Thr-286 phosphorylation. Ubiquitinated also by UHRF2 apparently in a phosphorylation-independent manner. Ubiquitination leads to its degradation and G1 arrest. Deubiquitinated by USP2; leading to its stabilization.

Its subcellular location is the nucleus. The protein localises to the cytoplasm. The protein resides in the nucleus membrane. Functionally, regulatory component of the cyclin D1-CDK4 (DC) complex that phosphorylates and inhibits members of the retinoblastoma (RB) protein family including RB1 and regulates the cell-cycle during G(1)/S transition. Phosphorylation of RB1 allows dissociation of the transcription factor E2F from the RB/E2F complex and the subsequent transcription of E2F target genes which are responsible for the progression through the G(1) phase. Hypophosphorylates RB1 in early G(1) phase. Cyclin D-CDK4 complexes are major integrators of various mitogenenic and antimitogenic signals. Also a substrate for SMAD3, phosphorylating SMAD3 in a cell-cycle-dependent manner and repressing its transcriptional activity. Component of the ternary complex, cyclin D1/CDK4/CDKN1B, required for nuclear translocation and activity of the cyclin D-CDK4 complex. Exhibits transcriptional corepressor activity with INSM1 on the NEUROD1 and INS promoters in a cell cycle-independent manner. This chain is G1/S-specific cyclin-D1 (Ccnd1), found in Rattus norvegicus (Rat).